The sequence spans 339 residues: Delta(9)-fatty-acid desaturase fat-6 (339 aa).

Helical transmembrane passes span V52–E72, T77–H97, Y195–W215, and A219–I241.

It belongs to the fatty acid desaturase type 1 family. In terms of tissue distribution, expressed in the intestine in adult worms and in all four larval stages. Additional expression in the hypodermis in all life stages.

It localises to the membrane. The enzyme catalyses octadecanoyl-CoA + 2 Fe(II)-[cytochrome b5] + O2 + 2 H(+) = (9Z)-octadecenoyl-CoA + 2 Fe(III)-[cytochrome b5] + 2 H2O. The catalysed reaction is hexadecanoyl-CoA + 2 Fe(II)-[cytochrome b5] + O2 + 2 H(+) = (9Z)-hexadecenoyl-CoA + 2 Fe(III)-[cytochrome b5] + 2 H2O. It catalyses the reaction heptadecanoyl-CoA + 2 Fe(II)-[cytochrome b5] + O2 + 2 H(+) = (9Z)-heptadecenoyl-CoA + 2 Fe(III)-[cytochrome b5] + 2 H2O. It carries out the reaction (11E)-octadecenoyl-CoA + 2 Fe(II)-[cytochrome b5] + O2 + 2 H(+) = (9Z,11E)-octadecadienoyl-CoA + 2 Fe(III)-[cytochrome b5] + 2 H2O. Its pathway is lipid metabolism; monounsaturated fatty acid biosynthesis. It functions in the pathway lipid metabolism; fatty acid metabolism. Its function is as follows. Delta(9)-fatty acid desaturase that acts preferentially on stearoyl-CoA (octadecanoyl-CoA) producing the monounsaturated oleoyl-CoA ((9Z)-octadecenoyl-CoA), one of the most abundant monounsaturated fatty acid in Caenorhabditis elegans phospholipids and triacylglycerols. Also acts on palmitoyl-CoA (hexadecanoyl-CoA), heptadecanoyl-CoA and (11E)-octadecenoyl-CoA (trans-vaccenoyl-CoA), the monounsaturated fatty acids (MUFAs) produced are further used as substrates to synthesize polyunsaturated fatty acids (PUFAs) by several other desaturases and elongases. Unlike plants, Caenorhabditis elegans desaturases seem to use fatty acyl-CoAs as substrates. The sequence is that of Delta(9)-fatty-acid desaturase fat-6 (fat-6) from Caenorhabditis elegans.